The primary structure comprises 77 residues: Large ribosomal subunit protein uL24 (77 aa).

The segment at 42–61 (KKHQKPSQTNANGGVVESEG) is disordered.

The protein belongs to the universal ribosomal protein uL24 family. As to quaternary structure, part of the 50S ribosomal subunit.

In terms of biological role, one of two assembly initiator proteins, it binds directly to the 5'-end of the 23S rRNA, where it nucleates assembly of the 50S subunit. One of the proteins that surrounds the polypeptide exit tunnel on the outside of the subunit. This Lactobacillus helveticus (strain DPC 4571) protein is Large ribosomal subunit protein uL24.